A 321-amino-acid polypeptide reads, in one-letter code: MIDFRPFYQQIATTNLSDWLETLPLQLKEWETQTHGDYAKWSKIVDFLPDLHADEIDLKSAVKSDRTFPLSEGEKQRIIHHLKQLMPWRKGPYHLFGIHVDCEWRSDFKWDRVLPHLAPLQGRTILDVGCGSGYHMWRMVGEGAKMVVGIDPTELFLCQFEAVRKLLNNDRRANLIPLGIEQMQPLAAFDTVFSMGVLYHRKSPLDHLSQLKNQLVKGGELVLETLVVDGDVNTVLIPADRYAKMKNVYFIPSVAALINWLEKVGFTNVRCVDVATTTLEEQRKTDWLENESLIDFLDSNDHSKTIEGYQAPKRAVILANK.

Carboxy-S-adenosyl-L-methionine is bound by residues Lys-90, Trp-104, Lys-109, Gly-129, 151–153 (DPT), 180–181 (IE), Met-195, Tyr-199, and Arg-314.

The protein belongs to the class I-like SAM-binding methyltransferase superfamily. CmoB family. Homotetramer.

It carries out the reaction carboxy-S-adenosyl-L-methionine + 5-hydroxyuridine(34) in tRNA = 5-carboxymethoxyuridine(34) in tRNA + S-adenosyl-L-homocysteine + H(+). Functionally, catalyzes carboxymethyl transfer from carboxy-S-adenosyl-L-methionine (Cx-SAM) to 5-hydroxyuridine (ho5U) to form 5-carboxymethoxyuridine (cmo5U) at position 34 in tRNAs. The sequence is that of tRNA U34 carboxymethyltransferase from Haemophilus influenzae (strain 86-028NP).